Reading from the N-terminus, the 883-residue chain is Copper-transporting ATPase PAA2, chloroplastic (883 aa).

The transit peptide at 1–65 (MASNLLRFPL…TQSFESTESS (65 aa)) directs the protein to the chloroplast. Residues 76-146 (TPILLDVSGM…RLTESGFEAK (71 aa)) enclose the HMA domain. Cu cation-binding residues include Cys-87 and Cys-90. The next 6 helical transmembrane spans lie at 179 to 199 (VAFA…HILH), 209 to 229 (GIWD…GALL), 250 to 270 (MNSL…ISLV), 274 to 294 (LEWD…VLLG), 445 to 465 (AIAG…FAFW), and 499 to 519 (VLVV…ILIG). Asp-548 functions as the 4-aspartylphosphate intermediate in the catalytic mechanism. 761-768 (GDGINDAP) is an ATP binding site. Positions 762 and 766 each coordinate Mg(2+). The next 2 membrane-spanning stretches (helical) occupy residues 822 to 842 (LAWA…VLLP) and 846 to 866 (FAMT…FVVS).

This sequence belongs to the cation transport ATPase (P-type) (TC 3.A.3) family. Type IB subfamily. In terms of tissue distribution, expressed in the shoots only and not in the roots.

Its subcellular location is the plastid. The protein resides in the chloroplast thylakoid membrane. The catalysed reaction is Cu(2+)(in) + ATP + H2O = Cu(2+)(out) + ADP + phosphate + H(+). In terms of biological role, mediates copper transfer across the chloroplast thylakoid membrane. Required for copper delivery into the thylakoids lumen, which is essential for the function of copper proteins. This chain is Copper-transporting ATPase PAA2, chloroplastic (PAA2), found in Arabidopsis thaliana (Mouse-ear cress).